A 137-amino-acid chain; its full sequence is ATP synthase epsilon chain (137 aa).

Belongs to the ATPase epsilon chain family. F-type ATPases have 2 components, CF(1) - the catalytic core - and CF(0) - the membrane proton channel. CF(1) has five subunits: alpha(3), beta(3), gamma(1), delta(1), epsilon(1). CF(0) has three main subunits: a, b and c.

Its subcellular location is the cell membrane. Its function is as follows. Produces ATP from ADP in the presence of a proton gradient across the membrane. This is ATP synthase epsilon chain from Streptococcus agalactiae serotype Ia (strain ATCC 27591 / A909 / CDC SS700).